The chain runs to 540 residues: Chaperonin GroEL 2/3 (540 aa).

ATP is bound by residues 30–33 (TLGP), Lys-51, 87–91 (DGTTT), Gly-415, 479–481 (NAA), and Asp-495.

Belongs to the chaperonin (HSP60) family. As to quaternary structure, forms a cylinder of 14 subunits composed of two heptameric rings stacked back-to-back. Interacts with the co-chaperonin GroES.

The protein localises to the cytoplasm. The enzyme catalyses ATP + H2O + a folded polypeptide = ADP + phosphate + an unfolded polypeptide.. In terms of biological role, together with its co-chaperonin GroES, plays an essential role in assisting protein folding. The GroEL-GroES system forms a nano-cage that allows encapsulation of the non-native substrate proteins and provides a physical environment optimized to promote and accelerate protein folding. The protein is Chaperonin GroEL 2/3 of Paraburkholderia xenovorans (strain LB400).